The primary structure comprises 926 residues: Vacuolar protein sorting-associated protein 39 homolog (926 aa).

Positions 15–306 constitute a CNH domain; that stretch reads PVEVTCLAFQ…MTLCSGARGQ (292 aa). A CHCR repeat occupies 590–768; sequence DETEMARNLN…LFRTLVHPNQ (179 aa).

The protein belongs to the VAM6/VPS39 family. Probable core component of the homotypic fusion and vacuole protein sorting (HOPS) complex consisting of the core class C Vps proteins vps-11, vps-16, vps-18, and which further associates with vps-33.1, vps-39 and vps-41. May interact with lgg-2. Interacts with cuti-1.

It is found in the cytoplasm. Its subcellular location is the lysosome membrane. It localises to the late endosome membrane. The protein localises to the late endosome. The protein resides in the lysosome. Functionally, plays a role in vesicle-mediated protein trafficking to lysosomal compartments including the endocytic membrane transport and autophagic pathways. Believed to act in part as a component of the putative HOPS endosomal tethering complex which is proposed to be involved in the rab-5-to-rab-7 endosome conversion probably implicating sand-1, and via binding SNAREs and SNARE complexes to mediate tethering and docking events during SNARE-mediated membrane fusion. The HOPS complex is proposed to be recruited to rab-7 on the late endosomal membrane and to regulate late endocytic, phagocytic and autophagic traffic towards lysosomes. Involved in homotypic vesicle fusions between late endosomes and in heterotypic fusions between late endosomes and lysosomes. Required for fusion of endosomes. In association with lgg-2 mediates the tethering of autophagosomes with lysosomes to form autolysosomes. Within the HOPS complex, contributes to the normal development of gut granules in embryonic and adult intestinal cells. The sequence is that of Vacuolar protein sorting-associated protein 39 homolog from Caenorhabditis elegans.